We begin with the raw amino-acid sequence, 1609 residues long: MNSFASLGLIYSVVNLLTRVEAQIVFYQNSSTSLPVPTLVSTSIADFHESSSTGEVQYSSSYSYVQPSIDSFTSSSFLTSFEAPTETSSSYAVSSSLITSDTFSSYSDIFDEETSSLISTSAASSEKASSTLSSTAQPHRTSHSSSSFELPVTAPSSSSLPSSTSLTFTSVNPSQSWTSFNSEKSSALSSTIDFTSSEISGSTSPKSLESFDTTGTITSSYSPSPSSKNSNQTSLLSPLEPLSSSSGDLILSSTIQATTNDQTSKTIPTLVDATSSLPPTLRSSSMAPTSGSDSISHNFTSPPSKTSGNYDVLTSNSIDPSLFTTTSEYSSTQLSSLNRASKSETVNFTASIASTPFGTDSATSLIDPISSVGSTASSFVGISTANFSTQGNSNYVPESTASGSSQYQDWSSSSLPLSQTTWVVINTTNTQGSVTSTTSPAYVSTATKTVDGVITEYVTWCPLTQTKSQAIGVSSSISSVPQASSFSGSSILSSNSSTLAASNNVPESTASGSSQYQDWSSSSLPLSQTTWVVINTTNTQGSVTSTTSPAYVSTATKTVDGVITEYVTWCPLTQTKSQAIGISSSTISATQTSKPSSILTLGISTLQLSDATFKGTETINTHLMTESTSITEPTYFSGTSDSFYLCTSEVNLASSLSSYPNFSSSEGSTATITNSTVTFGSTSKYPSTSVSNPTEASQHVSSSVNSLTDFTSNSTETIAVISNIHKTSSNKDYSLTTTQLKTSGMQTLVLSTVTTTVNGAATEYTTWCPASSIAYTTSISYKTLVLTTEVCSHSECTPTVITSVTATSSTIPLLSTSSSTVLSSTVSEGAKNPAASEVTINTQVSATSEATSTSTQVSATSATATASESSTTSQVSTASETISTLGTQNFTTTGSLLFPALSTEMINTTVVSRKTLIISTEVCSHSKCVPTVITEVVTSKGTPSNGHSSQTLQTEAVEVTLSSHQTVTMSTEVCSNSICTPTVITSVQMRSTPFPYLTSSTSSSSLASTKKSSLEASSEMSTFSVSTQSLPLAFTSSEKRSTTSVSQWSNTVLTNTIMSSSSNVISTNEKPSSTTSPYNFSSGYSLPSSSTPSQYSLSTATTTINGIKTVYTTWCPLAEKSTVAASSQSSRSVDRFVSSSKPSSSLSQTSIQYTLSTATTTISGLKTVYTTWCPLTSKSTLGATTQTSSTAKVRITSASSATSTSISLSTSTESESSSGYLSKGVCSGTECTQDVPTQSSSPASTLAYSPSVSTSSSSSFSTTTASTLTSTHTSVPLLPSSSSISASSPSSTSLLSTSLPSPAFTSSTLPTATAVSSSTFIASSLPLSSKSSLSLSPVSSSILMSQFSSSSSSSSSLASLPSLSISPTVDTVSVLQPTTSIATLTCTDSQCQQEVSTICNGSNCDDVTSTATTPPSTVTDTMTCTGSECQKTTSSSCDGYSCKVSETYKSSATISACSGEGCQASATSELNSQYVTMTSVITPSAITTTSVEVHSTESTISITTVKPVTYTSSDTNGELITITSSSQTVIPSVTTIITRTKVAITSAPKPTTTTYVEQRLSSSGIATSFVAAASSTWITTPIVSTYAGSASKFLCSKFFMIMVMVINFI.

The first 22 residues, 1-22, serve as a signal peptide directing secretion; the sequence is MNSFASLGLIYSVVNLLTRVEA. N-linked (GlcNAc...) asparagine glycosylation occurs at Asn29. 3 disordered regions span residues 129–165, 196–243, and 266–312; these read SSTL…SSTS, SSEI…EPLS, and TIPT…NYDV. The segment covering 137–148 has biased composition (polar residues); the sequence is QPHRTSHSSSSF. Low complexity predominate over residues 150–165; the sequence is LPVTAPSSSSLPSSTS. The span at 196-212 shows a compositional bias: polar residues; it reads SSEISGSTSPKSLESFD. Composition is skewed to low complexity over residues 213–243 and 274–285; these read TTGT…EPLS and TSSLPPTLRSSS. An N-linked (GlcNAc...) asparagine glycan is attached at Asn231. A compositionally biased stretch (polar residues) spans 286–312; it reads MAPTSGSDSISHNFTSPPSKTSGNYDV. 9 N-linked (GlcNAc...) asparagine glycosylation sites follow: Asn298, Asn347, Asn386, Asn426, Asn495, Asn535, Asn661, Asn674, and Asn713. The disordered stretch occupies residues 846 to 876; it reads ATSEATSTSTQVSATSATATASESSTTSQVS. 3 N-linked (GlcNAc...) asparagine glycosylation sites follow: Asn889, Asn907, and Asn1079. The span at 1231–1243 shows a compositional bias: polar residues; the sequence is CTQDVPTQSSSPA. The segment at 1231–1259 is disordered; the sequence is CTQDVPTQSSSPASTLAYSPSVSTSSSSS. Positions 1244–1259 are enriched in low complexity; sequence STLAYSPSVSTSSSSS. Residue Asn1400 is glycosylated (N-linked (GlcNAc...) asparagine). Gly1588 is lipidated: GPI-anchor amidated glycine. Positions 1589-1609 are cleaved as a propeptide — removed in mature form; the sequence is SASKFLCSKFFMIMVMVINFI.

In terms of processing, N-glycosylated.

It localises to the secreted. Its subcellular location is the cell wall. The protein localises to the membrane. In terms of biological role, required for efficient mating. Plays a role in maintenance of cell wall integrity during mating. Important for mating cell projection shape and conjugation bridge diameter. Plays a role in cell fusion and nuclear migration. In Saccharomyces cerevisiae (strain ATCC 204508 / S288c) (Baker's yeast), this protein is Factor-induced gene 2 protein (FIG2).